Consider the following 271-residue polypeptide: Nodulin-26 (271 aa).

The next 2 helical transmembrane spans lie at 40-62 (LVAE…VVNE) and 72-94 (GIAI…ISGG). Residues 97–99 (NPA) carry the NPA 1 motif. 3 helical membrane-spanning segments follow: residues 115–137 (VPAY…RLLF), 152–174 (TNLQ…ICGV), and 181–203 (VGEF…GGPV). The short motif at 209-211 (NPA) is the NPA 2 element. A helical membrane pass occupies residues 225–247 (GIWIYLLAPVVGAIAGAWVYNIV). Phosphoserine; by CPK is present on S262.

It belongs to the MIP/aquaporin (TC 1.A.8) family. NIP (TC 1.A.8.12) subfamily.

It is found in the symbiosome. The protein localises to the peribacteroid membrane. In terms of biological role, aquaporins facilitate the transport of water and small neutral solutes across cell membranes. This aquaporin may function in transporting small molecules across the peribacteroid membranes. The polypeptide is Nodulin-26 (Glycine max (Soybean)).